The primary structure comprises 291 residues: Pyridoxal 5'-phosphate synthase subunit PdxS (291 aa).

Asp-23 is a binding site for D-ribose 5-phosphate. The active-site Schiff-base intermediate with D-ribose 5-phosphate is Lys-80. A D-ribose 5-phosphate-binding site is contributed by Gly-152. Arg-164 is a D-glyceraldehyde 3-phosphate binding site. Residues Gly-213 and 234-235 (GS) each bind D-ribose 5-phosphate.

The protein belongs to the PdxS/SNZ family. In terms of assembly, in the presence of PdxT, forms a dodecamer of heterodimers.

It catalyses the reaction aldehydo-D-ribose 5-phosphate + D-glyceraldehyde 3-phosphate + L-glutamine = pyridoxal 5'-phosphate + L-glutamate + phosphate + 3 H2O + H(+). It functions in the pathway cofactor biosynthesis; pyridoxal 5'-phosphate biosynthesis. Catalyzes the formation of pyridoxal 5'-phosphate from ribose 5-phosphate (RBP), glyceraldehyde 3-phosphate (G3P) and ammonia. The ammonia is provided by the PdxT subunit. Can also use ribulose 5-phosphate and dihydroxyacetone phosphate as substrates, resulting from enzyme-catalyzed isomerization of RBP and G3P, respectively. This Haemophilus influenzae (strain PittGG) protein is Pyridoxal 5'-phosphate synthase subunit PdxS.